Here is a 250-residue protein sequence, read N- to C-terminus: mRNA-decapping protein g5R (250 aa).

Residues 97 to 243 (QKFRKNWLLP…IIGPAFNFIK (147 aa)) form the Nudix hydrolase domain. The Nudix box motif lies at 132–153 (GKPKEDESDLTCAIREFEEETG). Glu-138 is a binding site for Mg(2+). The active-site Nucleophile is Glu-147. 2 residues coordinate Mg(2+): Glu-151 and Asp-173.

It belongs to the Nudix hydrolase family. DIPP subfamily. As to quaternary structure, interacts with host RPL23A. Mg(2+) serves as cofactor. It depends on Mn(2+) as a cofactor.

The protein localises to the host rough endoplasmic reticulum. It catalyses the reaction diphospho-myo-inositol polyphosphate + H2O = myo-inositol polyphosphate + phosphate.. Functionally, decapping enzyme required for the removal of the 5'-end m7GpppN cap tethered to viral and host mRNAs to allow their decay in cells. May therefore accelerate viral and cellular mRNA turnover to eliminate competing host mRNAs and allow stage-specific synthesis of viral proteins. Acceleration of the turnover of cellular transcripts may even promote the shutoff of host protein synthesis. In addition to the mRNA cap, g5R also efficiently hydrolyzes diphosphoinositol polyphosphates. Down-regulation of the level of PP-InsP5 (diphosphoinositol pentakisphosphate) may play a role in viral manipulation of the cellular secretory pathway, a step necessary for the formation of virions. Binds viral and cellular poly(A) mRNAs, thereby decreasing both types of mRNAs. The polypeptide is mRNA-decapping protein g5R (African swine fever virus (isolate Tick/South Africa/Pretoriuskop Pr4/1996) (ASFV)).